A 344-amino-acid polypeptide reads, in one-letter code: MAYYLKEPSIPTQEPERTGILVMNLGTPEAPTAKALRPYLRQFLSDRRVIELPRPLWWFILNGVILVLRPRQSAHKYATIWDKEGPPLMVNSQKQARLLEGYLHEAISSPYAVELGMRYGSPSIASALGKLKAKNCNRILLFPLYPQYAASSSASALDEAMRTLIRTRNMPEIRTIRDYHDHPAYIHAVAKSIRLYWQQHGKPEKLVMSFHGVPRRTYDLGDPYYDQCQTSGKLVAQALGLEEDQYMIAFQSRFGTAEWLQPYFAPSIQALGKQKLRRVDVVCPGFSSDCLETLEEIAMEGKSLFLEGGGGEYHYIPALNDNDTWIKAMREIALDNLQGWVTRR.

His-211 and Glu-292 together coordinate Fe cation.

It belongs to the ferrochelatase family.

It localises to the cytoplasm. It catalyses the reaction heme b + 2 H(+) = protoporphyrin IX + Fe(2+). The protein operates within porphyrin-containing compound metabolism; protoheme biosynthesis; protoheme from protoporphyrin-IX: step 1/1. Its function is as follows. Catalyzes the ferrous insertion into protoporphyrin IX. The chain is Ferrochelatase from Methylobacillus flagellatus (strain ATCC 51484 / DSM 6875 / VKM B-1610 / KT).